A 283-amino-acid chain; its full sequence is NAD kinase (283 aa).

Asp68 (proton acceptor) is an active-site residue. Residues 68-69 (DG), Arg73, 142-143 (ND), Arg153, Arg170, Asp172, and 183-188 (TAYSLS) contribute to the NAD(+) site.

The protein belongs to the NAD kinase family. Requires a divalent metal cation as cofactor.

Its subcellular location is the cytoplasm. The catalysed reaction is NAD(+) + ATP = ADP + NADP(+) + H(+). Involved in the regulation of the intracellular balance of NAD and NADP, and is a key enzyme in the biosynthesis of NADP. Catalyzes specifically the phosphorylation on 2'-hydroxyl of the adenosine moiety of NAD to yield NADP. This is NAD kinase from Symbiobacterium thermophilum (strain DSM 24528 / JCM 14929 / IAM 14863 / T).